A 288-amino-acid chain; its full sequence is Phenazine biosynthesis-like domain-containing protein (288 aa).

The active site involves Glu-46.

This sequence belongs to the PhzF family. As to quaternary structure, interacts with UNRIP/MAWD.

This Rattus norvegicus (Rat) protein is Phenazine biosynthesis-like domain-containing protein (Pbld).